Reading from the N-terminus, the 162-residue chain is Shikimate kinase (162 aa).

Residue Gly-11–Ser-16 coordinates ATP. Ser-15 serves as a coordination point for Mg(2+). 3 residues coordinate substrate: Asp-33, Arg-57, and Gly-80. Arg-116 lines the ATP pocket. Arg-132 lines the substrate pocket.

Belongs to the shikimate kinase family. Monomer. Mg(2+) is required as a cofactor.

It localises to the cytoplasm. It carries out the reaction shikimate + ATP = 3-phosphoshikimate + ADP + H(+). It functions in the pathway metabolic intermediate biosynthesis; chorismate biosynthesis; chorismate from D-erythrose 4-phosphate and phosphoenolpyruvate: step 5/7. In terms of biological role, catalyzes the specific phosphorylation of the 3-hydroxyl group of shikimic acid using ATP as a cosubstrate. This is Shikimate kinase from Helicobacter pylori (strain J99 / ATCC 700824) (Campylobacter pylori J99).